Here is a 364-residue protein sequence, read N- to C-terminus: Probable endopolygalacturonase B (364 aa).

Positions 1 to 20 are cleaved as a signal peptide; sequence MHFFQSSLVAATMGAALVAA. Positions 21–29 are excised as a propeptide; sequence APAADLETR. The cysteines at positions 32 and 47 are disulfide-linked. 2 N-linked (GlcNAc...) asparagine glycosylation sites follow: N138 and N141. PbH1 repeat units lie at residues 159–188, 189–210, 211–231, 240–261, 269–291, and 303–324; these read SDHL…DVGS, STYI…AVNS, GEHI…SIGS, VNDV…RIKT, VTGV…VVQQ, and TNGV…TSSA. D203 functions as the Proton donor in the catalytic mechanism. A disulfide bridge links C205 with C221. The active site involves H225. C331 and C336 form a disulfide bridge. N-linked (GlcNAc...) asparagine glycosylation occurs at N338. Residues C355 and C364 are joined by a disulfide bond.

The protein belongs to the glycosyl hydrolase 28 family.

The protein resides in the secreted. The catalysed reaction is (1,4-alpha-D-galacturonosyl)n+m + H2O = (1,4-alpha-D-galacturonosyl)n + (1,4-alpha-D-galacturonosyl)m.. In terms of biological role, involved in maceration and soft-rotting of plant tissue. Hydrolyzes the 1,4-alpha glycosidic bonds of de-esterified pectate in the smooth region of the plant cell wall. The sequence is that of Probable endopolygalacturonase B (pgaB) from Aspergillus fumigatus (strain CBS 144.89 / FGSC A1163 / CEA10) (Neosartorya fumigata).